The following is a 207-amino-acid chain: Ribosomal RNA small subunit methyltransferase G (207 aa).

S-adenosyl-L-methionine contacts are provided by residues G73, L78, 124–125 (VE), and R139.

Belongs to the methyltransferase superfamily. RNA methyltransferase RsmG family.

The protein localises to the cytoplasm. It catalyses the reaction guanosine(527) in 16S rRNA + S-adenosyl-L-methionine = N(7)-methylguanosine(527) in 16S rRNA + S-adenosyl-L-homocysteine. Functionally, specifically methylates the N7 position of guanine in position 527 of 16S rRNA. This chain is Ribosomal RNA small subunit methyltransferase G, found in Salmonella agona (strain SL483).